The primary structure comprises 629 residues: Bifunctional protein ArgHA (629 aa).

Positions 1–499 (MALWGGRFSQ…NLPRSRSDLV (499 aa)) are argininosuccinate lyase. The N-acetyltransferase domain maps to 464–598 (ISIRAARLTD…EKVLKDCDMC (135 aa)). Positions 500-629 (KAVGTFAVTE…INLKAEKLAS (130 aa)) are amino-acid acetyltransferase.

It in the N-terminal section; belongs to the lyase 1 family. Argininosuccinate lyase subfamily. In the C-terminal section; belongs to the acetyltransferase family. ArgA subfamily.

It is found in the cytoplasm. It carries out the reaction 2-(N(omega)-L-arginino)succinate = fumarate + L-arginine. The enzyme catalyses L-glutamate + acetyl-CoA = N-acetyl-L-glutamate + CoA + H(+). It participates in amino-acid biosynthesis; L-arginine biosynthesis; N(2)-acetyl-L-ornithine from L-glutamate: step 1/4. Its pathway is amino-acid biosynthesis; L-arginine biosynthesis; L-arginine from L-ornithine and carbamoyl phosphate: step 3/3. The polypeptide is Bifunctional protein ArgHA (argHA) (Moritella abyssi).